Consider the following 275-residue polypeptide: tRNA uridine(34) hydroxylase (275 aa).

A Rhodanese domain is found at 122–218 (SRSDVYTIDT…YFKSTQNKNS (97 aa)). Residue Cys178 is the Cysteine persulfide intermediate of the active site.

Belongs to the TrhO family.

It catalyses the reaction uridine(34) in tRNA + AH2 + O2 = 5-hydroxyuridine(34) in tRNA + A + H2O. In terms of biological role, catalyzes oxygen-dependent 5-hydroxyuridine (ho5U) modification at position 34 in tRNAs. In Ehrlichia chaffeensis (strain ATCC CRL-10679 / Arkansas), this protein is tRNA uridine(34) hydroxylase.